Reading from the N-terminus, the 626-residue chain is E3 ubiquitin-protein ligase CHFR (626 aa).

The FHA domain maps to 34-85; that stretch reads WTIGRKKACDLSFPGNKLVSGEHCKITVNEESGSVSLEDTSTNGTVINKLKV. Polar residues-rich tracts occupy residues 123–133 and 140–149; these read EDSMQNPADTS and TQTLSSQDDQ. 2 disordered regions span residues 123–170 and 188–229; these read EDSM…TPTT and PGVQ…MRTE. The span at 158–170 shows a compositional bias: low complexity; that stretch reads STSTSSLFSTPTT. Residues 194–203 show a composition bias toward basic and acidic residues; it reads SGEKSGESLE. An RING-type zinc finger spans residues 267-306; the sequence is CIICQELLHDCVSLQPCMHTFCAACYSGWMERSSLCPTCR. Disordered regions lie at residues 351–387 and 402–428; these read DMLQPKVRRSFSDEEGSSEDLLELSDVDSESSDISQP and IQPPPYPPPSDTEASRTQGDAPSTSTN. Over residues 363–381 the composition is skewed to acidic residues; that stretch reads DEEGSSEDLLELSDVDSES. Polar residues predominate over residues 416–428; it reads SRTQGDAPSTSTN. The PBZ-type zinc finger occupies 595–617; sequence PNCYWGRNCRTQVKAHHAMKFNH.

The protein belongs to the CHFR family.

It is found in the nucleus. It localises to the PML body. The catalysed reaction is S-ubiquitinyl-[E2 ubiquitin-conjugating enzyme]-L-cysteine + [acceptor protein]-L-lysine = [E2 ubiquitin-conjugating enzyme]-L-cysteine + N(6)-ubiquitinyl-[acceptor protein]-L-lysine.. The protein operates within protein modification; protein ubiquitination. Functionally, E3 ubiquitin-protein ligase that functions in the antephase checkpoint by actively delaying passage into mitosis in response to microtubule poisons. Acts in early prophase before chromosome condensation, when the centrosome move apart from each other along the periphery of the nucleus. Probably involved in signaling the presence of mitotic stress caused by microtubule poisons by mediating the 'Lys-48'-linked ubiquitination of target proteins, leading to their degradation by the proteasome. May also promote the formation of 'Lys-63'-linked polyubiquitin chains and functions with the specific ubiquitin-conjugating ubc13-mms2 (ube2n-ube2v2) heterodimer. Substrates that are polyubiquitinated at 'Lys-63' are usually not targeted for degradation, but are rather involved in signaling cellular stress. The sequence is that of E3 ubiquitin-protein ligase CHFR (chfr) from Xenopus tropicalis (Western clawed frog).